Consider the following 455-residue polypeptide: UDP-N-acetylmuramoylalanine--D-glutamate ligase (455 aa).

112–118 (GTNGKTT) contacts ATP.

This sequence belongs to the MurCDEF family.

The protein localises to the cytoplasm. The catalysed reaction is UDP-N-acetyl-alpha-D-muramoyl-L-alanine + D-glutamate + ATP = UDP-N-acetyl-alpha-D-muramoyl-L-alanyl-D-glutamate + ADP + phosphate + H(+). It functions in the pathway cell wall biogenesis; peptidoglycan biosynthesis. Functionally, cell wall formation. Catalyzes the addition of glutamate to the nucleotide precursor UDP-N-acetylmuramoyl-L-alanine (UMA). The polypeptide is UDP-N-acetylmuramoylalanine--D-glutamate ligase (Trichormus variabilis (strain ATCC 29413 / PCC 7937) (Anabaena variabilis)).